The following is a 173-amino-acid chain: MDTDINLKNLPYRRCVGVVVFNHEGKVWVGRRLTKYAHADTEMSHRWQLPQGGIDEGEEPLDAACRELYEETGIRSIKLIKEARDWFYYDFPQKLVGCTLKNKYRGQIQKWFAFQFTGKLSEIATNPPPDDNKAEFDQWKWVDLEALPSIVISFKKHVYRKVVSEFRGSFRCL.

Residues 11–164 (PYRRCVGVVV…KKHVYRKVVS (154 aa)) enclose the Nudix hydrolase domain. The short motif at 52-73 (GGIDEGEEPLDAACRELYEETG) is the Nudix box element.

This sequence belongs to the Nudix hydrolase family. RppH subfamily. A divalent metal cation is required as a cofactor.

Its function is as follows. Accelerates the degradation of transcripts by removing pyrophosphate from the 5'-end of triphosphorylated RNA, leading to a more labile monophosphorylated state that can stimulate subsequent ribonuclease cleavage. In Bartonella quintana (strain Toulouse) (Rochalimaea quintana), this protein is RNA pyrophosphohydrolase.